A 213-amino-acid chain; its full sequence is Methylthioribulose-1-phosphate dehydratase (213 aa).

2 residues coordinate Zn(2+): His104 and His106.

This sequence belongs to the aldolase class II family. MtnB subfamily. It depends on Zn(2+) as a cofactor.

The catalysed reaction is 5-(methylsulfanyl)-D-ribulose 1-phosphate = 5-methylsulfanyl-2,3-dioxopentyl phosphate + H2O. It functions in the pathway amino-acid biosynthesis; L-methionine biosynthesis via salvage pathway; L-methionine from S-methyl-5-thio-alpha-D-ribose 1-phosphate: step 2/6. In terms of biological role, catalyzes the dehydration of methylthioribulose-1-phosphate (MTRu-1-P) into 2,3-diketo-5-methylthiopentyl-1-phosphate (DK-MTP-1-P). The polypeptide is Methylthioribulose-1-phosphate dehydratase (Stenotrophomonas maltophilia (strain R551-3)).